The following is a 406-amino-acid chain: Peptidase T (406 aa).

Residue histidine 81 participates in Zn(2+) binding. Residue aspartate 83 is part of the active site. Aspartate 142 serves as a coordination point for Zn(2+). Catalysis depends on glutamate 176, which acts as the Proton acceptor. Glutamate 177, aspartate 199, and histidine 381 together coordinate Zn(2+).

It belongs to the peptidase M20B family. Requires Zn(2+) as cofactor.

Its subcellular location is the cytoplasm. The enzyme catalyses Release of the N-terminal residue from a tripeptide.. Cleaves the N-terminal amino acid of tripeptides. This is Peptidase T from Streptococcus pneumoniae serotype 2 (strain D39 / NCTC 7466).